A 342-amino-acid chain; its full sequence is Heat-inducible transcription repressor HrcA (342 aa).

It belongs to the HrcA family.

Negative regulator of class I heat shock genes (grpE-dnaK-dnaJ and groELS operons). Prevents heat-shock induction of these operons. The protein is Heat-inducible transcription repressor HrcA of Corynebacterium efficiens (strain DSM 44549 / YS-314 / AJ 12310 / JCM 11189 / NBRC 100395).